The primary structure comprises 242 residues: Type III pantothenate kinase (242 aa).

7-14 (DLGNSRFK) is a binding site for ATP. Substrate-binding positions include tyrosine 91 and 98–101 (GVDR). The active-site Proton acceptor is aspartate 100. Threonine 121 contacts ATP. Residue threonine 171 coordinates substrate.

The protein belongs to the type III pantothenate kinase family. As to quaternary structure, homodimer. NH4(+) serves as cofactor. It depends on K(+) as a cofactor.

It localises to the cytoplasm. The catalysed reaction is (R)-pantothenate + ATP = (R)-4'-phosphopantothenate + ADP + H(+). It participates in cofactor biosynthesis; coenzyme A biosynthesis; CoA from (R)-pantothenate: step 1/5. Functionally, catalyzes the phosphorylation of pantothenate (Pan), the first step in CoA biosynthesis. This chain is Type III pantothenate kinase, found in Xanthomonas axonopodis pv. citri (strain 306).